A 239-amino-acid chain; its full sequence is Putative GEM-like protein 3 (239 aa).

Residues 29-68 (HWNPELVSESPAPDEKALSSSSAARSNPYVARAPTETSDA) form a disordered region. The GRAM domain occupies 128–191 (KIFRQTFETV…HQLKSVNPSI (64 aa)).

The protein belongs to the GEM family.

The protein is Putative GEM-like protein 3 of Arabidopsis thaliana (Mouse-ear cress).